We begin with the raw amino-acid sequence, 345 residues long: uncharacterized protein (345 aa).

8 consecutive transmembrane segments (helical) span residues 9-31 (VVAF…AAFV), 84-103 (TLVA…TYLL), 116-138 (YFSL…ILYT), 148-170 (VPMQ…SGIF), 182-204 (VVFV…TIHA), 269-286 (WFFW…GVLG), 291-308 (ISHY…IAGY), and 313-335 (HGLT…VFFI).

The protein localises to the cell membrane. This is an uncharacterized protein from Treponema pallidum (strain Nichols).